The primary structure comprises 73 residues: Defensin-like protein 87 (73 aa).

The N-terminal stretch at 1–27 (MTTKKTSSVVLPLLLVFALILMPMVAG) is a signal peptide. Disulfide bonds link Cys33–Cys71, Cys45–Cys69, and Cys49–Cys70.

The protein belongs to the DEFL family.

The protein localises to the secreted. The chain is Defensin-like protein 87 from Arabidopsis thaliana (Mouse-ear cress).